We begin with the raw amino-acid sequence, 348 residues long: Phenylalanine--tRNA ligase alpha subunit (348 aa).

Position 269 (Glu-269) interacts with Mg(2+).

It belongs to the class-II aminoacyl-tRNA synthetase family. Phe-tRNA synthetase alpha subunit type 1 subfamily. Tetramer of two alpha and two beta subunits. Requires Mg(2+) as cofactor.

It is found in the cytoplasm. It carries out the reaction tRNA(Phe) + L-phenylalanine + ATP = L-phenylalanyl-tRNA(Phe) + AMP + diphosphate + H(+). The polypeptide is Phenylalanine--tRNA ligase alpha subunit (Dechloromonas aromatica (strain RCB)).